Consider the following 395-residue polypeptide: Phosphoglycerate kinase (395 aa).

Substrate-binding positions include 20–22, arginine 36, 59–62, arginine 120, and arginine 157; these read DFN and HLGR. ATP contacts are provided by residues lysine 208, glycine 296, glutamate 327, and 353 to 356; that span reads GGDT.

The protein belongs to the phosphoglycerate kinase family. Monomer.

It is found in the cytoplasm. It carries out the reaction (2R)-3-phosphoglycerate + ATP = (2R)-3-phospho-glyceroyl phosphate + ADP. It functions in the pathway carbohydrate degradation; glycolysis; pyruvate from D-glyceraldehyde 3-phosphate: step 2/5. The protein is Phosphoglycerate kinase of Tropheryma whipplei (strain TW08/27) (Whipple's bacillus).